Reading from the N-terminus, the 129-residue chain is MEKIMKKLTLALVLGSALVVTGCFDKQEAKQKVEDTKQTVASVASETKDAAANTMTEVKEKAQQLSTDVKNKVAEKVEDAKEVIKSATEAASEKVGEMKEAASEKASEMKEAVSEKATQAVDAVKEATK.

The segment covering 91 to 114 has biased composition (basic and acidic residues); sequence ASEKVGEMKEAASEKASEMKEAVS. The tract at residues 91-129 is disordered; it reads ASEKVGEMKEAASEKASEMKEAVSEKATQAVDAVKEATK.

Belongs to the LEA type 1 family.

This is an uncharacterized protein from Haemophilus influenzae (strain ATCC 51907 / DSM 11121 / KW20 / Rd).